Consider the following 236-residue polypeptide: Small ribosomal subunit protein eS6 (236 aa).

Phosphoserine occurs at positions 232 and 233.

This sequence belongs to the eukaryotic ribosomal protein eS6 family. Post-translationally, phosphorylated.

This Debaryomyces hansenii (strain ATCC 36239 / CBS 767 / BCRC 21394 / JCM 1990 / NBRC 0083 / IGC 2968) (Yeast) protein is Small ribosomal subunit protein eS6 (RPS6).